The primary structure comprises 426 residues: Serine--tRNA ligase (426 aa).

233-235 is an L-serine binding site; the sequence is TAE. 264–266 contributes to the ATP binding site; the sequence is RSE. E287 serves as a coordination point for L-serine. 351 to 354 is a binding site for ATP; it reads EISS. S387 contributes to the L-serine binding site.

It belongs to the class-II aminoacyl-tRNA synthetase family. Type-1 seryl-tRNA synthetase subfamily. As to quaternary structure, homodimer. The tRNA molecule binds across the dimer.

It localises to the cytoplasm. The catalysed reaction is tRNA(Ser) + L-serine + ATP = L-seryl-tRNA(Ser) + AMP + diphosphate + H(+). It carries out the reaction tRNA(Sec) + L-serine + ATP = L-seryl-tRNA(Sec) + AMP + diphosphate + H(+). Its pathway is aminoacyl-tRNA biosynthesis; selenocysteinyl-tRNA(Sec) biosynthesis; L-seryl-tRNA(Sec) from L-serine and tRNA(Sec): step 1/1. Catalyzes the attachment of serine to tRNA(Ser). Is also able to aminoacylate tRNA(Sec) with serine, to form the misacylated tRNA L-seryl-tRNA(Sec), which will be further converted into selenocysteinyl-tRNA(Sec). The chain is Serine--tRNA ligase from Clostridium botulinum (strain Okra / Type B1).